Here is a 429-residue protein sequence, read N- to C-terminus: uncharacterized protein (429 aa).

This is an uncharacterized protein from Mycobacterium tuberculosis (strain CDC 1551 / Oshkosh).